A 156-amino-acid chain; its full sequence is Small ribosomal subunit protein bS16 (156 aa).

Over residues 124-135 the composition is skewed to low complexity; that stretch reads AAKAAEAETPAE. The segment at 124–156 is disordered; sequence AAKAAEAETPAEVQHDDEKVELADVEESAPESV. A compositionally biased stretch (basic and acidic residues) spans 136-145; that stretch reads VQHDDEKVEL. Positions 146-156 are enriched in acidic residues; that stretch reads ADVEESAPESV.

Belongs to the bacterial ribosomal protein bS16 family.

The polypeptide is Small ribosomal subunit protein bS16 (Bifidobacterium animalis subsp. lactis (strain AD011)).